The following is a 116-amino-acid chain: Large ribosomal subunit protein bL19 (116 aa).

This sequence belongs to the bacterial ribosomal protein bL19 family.

Its function is as follows. This protein is located at the 30S-50S ribosomal subunit interface and may play a role in the structure and function of the aminoacyl-tRNA binding site. The sequence is that of Large ribosomal subunit protein bL19 from Stutzerimonas stutzeri (strain A1501) (Pseudomonas stutzeri).